Consider the following 131-residue polypeptide: Large ribosomal subunit protein bL17 (131 aa).

This sequence belongs to the bacterial ribosomal protein bL17 family. As to quaternary structure, part of the 50S ribosomal subunit. Contacts protein L32.

The sequence is that of Large ribosomal subunit protein bL17 from Methylibium petroleiphilum (strain ATCC BAA-1232 / LMG 22953 / PM1).